The chain runs to 284 residues: Bifunctional protein FolD (284 aa).

Residues 165–167 and serine 190 each bind NADP(+); that span reads GRS.

This sequence belongs to the tetrahydrofolate dehydrogenase/cyclohydrolase family. As to quaternary structure, homodimer.

The enzyme catalyses (6R)-5,10-methylene-5,6,7,8-tetrahydrofolate + NADP(+) = (6R)-5,10-methenyltetrahydrofolate + NADPH. It catalyses the reaction (6R)-5,10-methenyltetrahydrofolate + H2O = (6R)-10-formyltetrahydrofolate + H(+). It functions in the pathway one-carbon metabolism; tetrahydrofolate interconversion. Its function is as follows. Catalyzes the oxidation of 5,10-methylenetetrahydrofolate to 5,10-methenyltetrahydrofolate and then the hydrolysis of 5,10-methenyltetrahydrofolate to 10-formyltetrahydrofolate. This chain is Bifunctional protein FolD, found in Streptococcus uberis (strain ATCC BAA-854 / 0140J).